Consider the following 319-residue polypeptide: Ribonuclease Z (319 aa).

The Zn(2+) site is built by H62, H64, D66, H67, H139, D209, and H268. D66 (proton acceptor) is an active-site residue.

This sequence belongs to the RNase Z family. In terms of assembly, homodimer. Requires Zn(2+) as cofactor.

It catalyses the reaction Endonucleolytic cleavage of RNA, removing extra 3' nucleotides from tRNA precursor, generating 3' termini of tRNAs. A 3'-hydroxy group is left at the tRNA terminus and a 5'-phosphoryl group is left at the trailer molecule.. Zinc phosphodiesterase, which displays some tRNA 3'-processing endonuclease activity. Probably involved in tRNA maturation, by removing a 3'-trailer from precursor tRNA. This is Ribonuclease Z from Pseudomonas putida (strain ATCC 700007 / DSM 6899 / JCM 31910 / BCRC 17059 / LMG 24140 / F1).